The following is a 918-amino-acid chain: Chaperone protein ClpC1, chloroplastic (918 aa).

A Clp R domain is found at phenylalanine 88 to glutamate 230. Repeat regions lie at residues phenylalanine 91 to glycine 156 and phenylalanine 166 to glutamate 230. The tract at residues leucine 251–proline 498 is i. Glycine 296–threonine 303 contacts ATP. Positions aspartate 505 to glutamine 540 constitute a UVR domain. Residues valine 565–serine 756 form an II region. Residue glycine 639 to serine 646 participates in ATP binding.

This sequence belongs to the ClpA/ClpB family. ClpC subfamily. As to expression, widely expressed.

The protein resides in the plastid. It is found in the chloroplast. In terms of biological role, molecular chaperone that may interact with a ClpP-like protease involved in degradation of denatured proteins in the chloroplast. The sequence is that of Chaperone protein ClpC1, chloroplastic (CLPC1) from Oryza sativa subsp. japonica (Rice).